We begin with the raw amino-acid sequence, 463 residues long: MVPALRYLVGACGRARGLFAGGSPGACGFASGRPRPLCGGSRSASTSSFDIVIVGGGIVGLASARALILRHPSLSIGVLEKEKDLAVHQTGHNSGVIHSGIYYKPESLKAKLCVQGAALLYEYCQQKGISYKQCGKLIVAVEQEEIPRLQALYEKGLQNGVPGLRLIQQEDIKKKEPYCRGLMAIDCPHTGIVDYRQVALSFAQDFQEAGGSVLTNFEVKGIEMAKESPSRSIDGMQYPIVIKNTKGEEIRCQYVVTCAGLYSDRISELSGCTPDPRIVPFRGDYLLLKPEKCYLVKGNIYPVPDSRFPFLGVHFTPRMDGSIWLGPNAVLAFKREGYRPFDFSATDVMDIIINSGLIKLASQNFSYGVTEMYKACFLGATVKYLQKFIPEITISDILRGPAGVRAQALDRDGNLVEDFVFDAGVGDIGNRILHVRNAPSPAATSSIAISGMIADEVQQRFEL.

The N-terminal 51 residues, 1 to 51 (MVPALRYLVGACGRARGLFAGGSPGACGFASGRPRPLCGGSRSASTSSFDI), are a transit peptide targeting the mitochondrion. N6-acetyllysine occurs at positions 104, 155, and 173.

It belongs to the L2HGDH family. It depends on FAD as a cofactor. In terms of tissue distribution, widely expressed. Highly expressed in brain, testis and muscle. Expressed to a lower extent in lymphocytes, fibroblasts, keratinocytes, placenta, bladder, small intestine, liver and bone marrow.

It localises to the mitochondrion. It catalyses the reaction (S)-2-hydroxyglutarate + A = 2-oxoglutarate + AH2. This is L-2-hydroxyglutarate dehydrogenase, mitochondrial (L2HGDH) from Homo sapiens (Human).